The sequence spans 1538 residues: Lysophospholipase nte1 (1538 aa).

The Cytoplasmic segment spans residues 1–74 (MATDGGPLAA…PPPTPSTMAG (74 aa)). The helical transmembrane segment at 75-95 (WFGWVFSFFFQVIPSVLYWVI) threads the bilayer. Over 96-117 (TFATITLPTWLFTLFSMSLTFT) the chain is Lumenal. The chain crosses the membrane as a helical span at residues 118–138 (MNFTTLLLIALAIVSTISWFI). The Cytoplasmic segment spans residues 139–1538 (RYRFLNMYSR…RTLAPRRASI (1400 aa)). 3 disordered regions span residues 242-264 (KPNV…DHRV), 302-393 (EGSS…KSVH), and 529-559 (AAQS…GDLL). The span at 302-314 (EGSSSSASSVGPS) shows a compositional bias: low complexity. A compositionally biased stretch (basic and acidic residues) spans 329–345 (GLEDSPRSNFVRDHGDS). A nucleoside 3',5'-cyclic phosphate is bound by residues 692–811 (GGTS…QGYV) and 856–976 (RLTS…IAQR). The region spanning 1235-1399 (LVLGGGGARG…IDNLTVTHMK (165 aa)) is the PNPLA domain. Positions 1239–1244 (GGGARG) match the GXGXXG motif. A GXSXG motif is present at residues 1266-1270 (GTSIG). Residue Ser1268 is the Nucleophile of the active site. Asp1386 functions as the Proton acceptor in the catalytic mechanism. The short motif at 1386–1388 (DGG) is the DGA/G element. Positions 1517-1538 (LPEETEEKKKLQRTLAPRRASI) are disordered.

The protein belongs to the NTE family.

It is found in the endoplasmic reticulum membrane. It carries out the reaction a 1-acyl-sn-glycero-3-phosphocholine + H2O = sn-glycerol 3-phosphocholine + a fatty acid + H(+). Its activity is regulated as follows. Inhibited by organophosphorus esters. Intracellular phospholipase B that catalyzes the double deacylation of phosphatidylcholine (PC) to glycerophosphocholine (GroPCho). Plays an important role in membrane lipid homeostasis. Responsible for the rapid PC turnover in response to inositol, elevated temperatures, or when choline is present in the growth medium. The polypeptide is Lysophospholipase nte1 (nte1) (Aspergillus oryzae (strain ATCC 42149 / RIB 40) (Yellow koji mold)).